The sequence spans 1451 residues: Dual 3',5'-cyclic-AMP and -GMP phosphodiesterase 11 (1451 aa).

Disordered stretches follow at residues 1–54, 75–100, 125–169, 235–262, and 327–374; these read MGQA…PQIQ, ATTP…GGYG, LPAH…QVQQ, GNDV…GATT, and QHHH…GSGG. Residues 11–21 are compositionally biased toward basic residues; that stretch reads RGCRYKNKNKS. The segment covering 24-45 has biased composition (low complexity); sequence QQQQQQQQQQQQQQQHQQQQQQ. Polar residues predominate over residues 77–91; that stretch reads TPLQFQPTGRMNTEQ. Low complexity-rich tracts occupy residues 135 to 147 and 160 to 169; these read SGAA…NGSS and QQQQQYQVQQ. Residues 235–248 are compositionally biased toward polar residues; that stretch reads GNDVVSSTSPTHAN. Basic residues predominate over residues 327 to 340; it reads QHHHNHAHLHHSQH. Low complexity predominate over residues 341 to 355; it reads SHYQAGGAVGSSSLG. Gly residues predominate over residues 356 to 374; sequence STGGASGAGGAPSLGGSGG. GAF domains lie at 419–572 and 604–754; these read EVRT…GIGL and TIEH…GMGI. One can recognise a PDEase domain in the interval 783-1107; sequence ATMDEAHRLR…GHWIDLADVV (325 aa). His860 functions as the Proton donor in the catalytic mechanism. The a divalent metal cation site is built by His864, His900, Asp901, and Asp1011. 4 disordered regions span residues 1109–1171, 1200–1248, 1268–1305, and 1325–1364; these read TKTS…SNTN, DEQA…TPVS, QTSN…QELD, and INNH…IGSA. 2 stretches are compositionally biased toward low complexity: residues 1142–1171 and 1218–1234; these read ASEA…SNTN and CRSN…SCLS. Residues 1268–1277 are compositionally biased toward polar residues; it reads QTSNQAQTQK. The segment covering 1328–1355 has biased composition (basic residues); the sequence is HSHHHNHSHSHNHNHHHHHHHHSHHNHS.

The protein belongs to the cyclic nucleotide phosphodiesterase family. A divalent metal cation is required as a cofactor. In adults, it is enriched in Malpighian tubules.

It catalyses the reaction 3',5'-cyclic GMP + H2O = GMP + H(+). The catalysed reaction is 3',5'-cyclic AMP + H2O = AMP + H(+). Plays a role in signal transduction by regulating the intracellular concentration of cyclic nucleotides cAMP and cGMP. Dual-specificity phosphodiesterase that catalyzes the hydrolysis of both cAMP and cGMP to 5'-AMP and 5'-GMP, respectively. This Drosophila melanogaster (Fruit fly) protein is Dual 3',5'-cyclic-AMP and -GMP phosphodiesterase 11 (Pde11).